We begin with the raw amino-acid sequence, 372 residues long: Alpha-1,3-mannosyl-glycoprotein 4-beta-N-acetylglucosaminyltransferase-like protein MGAT4D (372 aa).

Residues 1-8 (MKTKNVNL) are Cytoplasmic-facing. Residues 9 to 29 (LFALVAVLLFGFSCFCISRMN) traverse the membrane as a helical; Signal-anchor for type II membrane protein segment. Topologically, residues 30–372 (QTNNQLINCR…REQHLKDHYY (343 aa)) are lumenal. N-linked (GlcNAc...) asparagine glycans are attached at residues Asn-54 and Asn-143.

Belongs to the glycosyltransferase 54 family. In terms of assembly, may self-associate; specifically in the endoplasmic reticulum prior to its translocation to the Golgi. Interacts with MGAT1, MGAT3 and MAN2A2; may interact with MGTA1 specifically in the Golgi. N-glycosylated. O-glycosylated; further modified with terminal sialic acid residues. In terms of tissue distribution, testis.

It is found in the golgi apparatus membrane. The protein localises to the endoplasmic reticulum membrane. Its function is as follows. May play a role in male spermatogenesis. In vitro acts as inhibitor of MGAT1 activity causing cell surface proteins to carry mainly high mannose N-glycans. The function is mediated by its lumenal domain and occurs specifically in the Golgi. A catalytic glucosyltransferase activity is not detected. May be involved in regulation of Sertoli-germ cell interactions during specific stages of spermatogenesis. This chain is Alpha-1,3-mannosyl-glycoprotein 4-beta-N-acetylglucosaminyltransferase-like protein MGAT4D, found in Rattus norvegicus (Rat).